The following is a 517-amino-acid chain: Bifunctional purine biosynthesis protein PurH (517 aa).

One can recognise an MGS-like domain in the interval 1 to 145 (MSPLALVSVS…KNHKDVSVLV (145 aa)).

The protein belongs to the PurH family.

It carries out the reaction (6R)-10-formyltetrahydrofolate + 5-amino-1-(5-phospho-beta-D-ribosyl)imidazole-4-carboxamide = 5-formamido-1-(5-phospho-D-ribosyl)imidazole-4-carboxamide + (6S)-5,6,7,8-tetrahydrofolate. The enzyme catalyses IMP + H2O = 5-formamido-1-(5-phospho-D-ribosyl)imidazole-4-carboxamide. It participates in purine metabolism; IMP biosynthesis via de novo pathway; 5-formamido-1-(5-phospho-D-ribosyl)imidazole-4-carboxamide from 5-amino-1-(5-phospho-D-ribosyl)imidazole-4-carboxamide (10-formyl THF route): step 1/1. It functions in the pathway purine metabolism; IMP biosynthesis via de novo pathway; IMP from 5-formamido-1-(5-phospho-D-ribosyl)imidazole-4-carboxamide: step 1/1. The protein is Bifunctional purine biosynthesis protein PurH of Prochlorococcus marinus (strain MIT 9301).